The primary structure comprises 1779 residues: Collagen alpha-1(IV) chain (1779 aa).

An N-terminal signal peptide occupies residues 1 to 23 (MLPFWKRLLYAAVIAGALVGADA). N-linked (GlcNAc...) asparagine glycosylation occurs at N72. Disordered regions lie at residues 89 to 643 (GNRG…KPAL), 655 to 1187 (DKGY…LPGL), 1200 to 1285 (TGAP…IGPR), and 1336 to 1530 (GLPG…RGYE). The segment covering 144-163 (QAGVPGVQGPAGNPGAPGIN) has biased composition (low complexity). Basic and acidic residues-rich tracts occupy residues 196–217 (KGEK…KGEP) and 249–259 (PRGEHGLKGEK). Over residues 360–369 (PGLNGLPGNP) the composition is skewed to low complexity. The segment covering 434–443 (GQKGGAGLPG) has biased composition (gly residues). Positions 531–545 (GRPGTPGAAGAPGQK) are enriched in low complexity. The span at 724–747 (PGFHGRDGAKGDKGSFGRSGEKGE) shows a compositional bias: basic and acidic residues. Composition is skewed to low complexity over residues 913–931 (VGPI…PGID) and 1015–1036 (PGLM…QGLD). Basic and acidic residues predominate over residues 1106–1127 (EKGDQGRSGIDGRDGINGEKGE). Residues 1151–1170 (APGMDGLPGAAGAPGAVGYP) show a composition bias toward low complexity. 3 stretches are compositionally biased toward basic and acidic residues: residues 1224 to 1245 (IRGD…EQGE), 1496 to 1505 (ERGEKGERGL), and 1517 to 1529 (PKGD…ERGY). The Collagen IV NC1 domain maps to 1555–1778 (GILITRHSQS…SRCQVCMKNS (224 aa)). 6 cysteine pairs are disulfide-bonded: C1570–C1659, C1603–C1656, C1615–C1621, C1678–C1774, C1712–C1771, and C1724–C1731.

This sequence belongs to the type IV collagen family. As to quaternary structure, trimers of two alpha 1(IV) and one alpha 2(IV) chain. Type IV collagen forms a mesh-like network linked through intermolecular interactions between 7S domains and between NC1 domains. In terms of processing, prolines at the third position of the tripeptide repeating unit (G-X-Y) are hydroxylated in some or all of the chains. Type IV collagens contain numerous cysteine residues which are involved in inter- and intramolecular disulfide bonding. 12 of these, located in the NC1 domain, are conserved in all known type IV collagens.

The protein localises to the secreted. The protein resides in the extracellular space. Its subcellular location is the extracellular matrix. It localises to the basement membrane. Its function is as follows. Collagen type IV is specific for basement membranes. The sequence is that of Collagen alpha-1(IV) chain from Drosophila melanogaster (Fruit fly).